We begin with the raw amino-acid sequence, 147 residues long: Ponticulin-like protein C3 (147 aa).

Positions 1 to 20 (MKFTKSLLLLIVAVFASSNA) are cleaved as a signal peptide. A lipid anchor (GPI-like-anchor amidated asparagine) is attached at N118. N-linked (GlcNAc...) asparagine glycosylation occurs at N118. A propeptide spans 119-147 (SSESDSSDSTRIGASFALFALALLSMLAL) (removed in mature form).

Belongs to the ponticulin family. Post-translationally, the GPI-like-anchor contains a phosphoceramide group, rather than a phosphatidyl group.

It is found in the cell membrane. The polypeptide is Ponticulin-like protein C3 (ponC3) (Dictyostelium discoideum (Social amoeba)).